Reading from the N-terminus, the 193-residue chain is Transmembrane protein 276 (193 aa).

Positions 1 to 32 (MTPRPGGEWSSALSHLALGAVSLHAALSTAQA) are cleaved as a signal peptide. Transmembrane regions (helical) follow at residues 35–55 (GAAAGFLLQALATATMLASGL), 63–83 (AGAWVATVIGLPLLAFDFHWV), 89–109 (SANLLLGGGMVLAVAGDHLGA), and 114–134 (VAGQAVVLVVAVTILIVAVFT).

The protein localises to the membrane. In Bos taurus (Bovine), this protein is Transmembrane protein 276.